The following is a 285-amino-acid chain: uncharacterized protein (285 aa).

7 consecutive transmembrane segments (helical) span residues 6-26, 38-58, 84-104, 110-130, 153-173, 176-196, and 236-256; these read YLVVILTVAGVLVILGFTPLI, VFAAILFLYVFFGRQIIYIFP, IFLLDLCPFFALIGPIFIFLR, GVLAIFGFYGAAITLFGELIF, FMMHFLSFLLSLAVFLWDDGF, ISFFYIHVFALAYLSYVALMV, and LIFGVSFGLSYFAIVLLTVLV.

The protein resides in the cell membrane. This is an uncharacterized protein from Mycoplasma pneumoniae (strain ATCC 29342 / M129 / Subtype 1) (Mycoplasmoides pneumoniae).